We begin with the raw amino-acid sequence, 378 residues long: Ribosomal RNA large subunit methyltransferase G (378 aa).

The protein belongs to the methyltransferase superfamily. RlmG family.

It is found in the cytoplasm. It catalyses the reaction guanosine(1835) in 23S rRNA + S-adenosyl-L-methionine = N(2)-methylguanosine(1835) in 23S rRNA + S-adenosyl-L-homocysteine + H(+). Functionally, specifically methylates the guanine in position 1835 (m2G1835) of 23S rRNA. The polypeptide is Ribosomal RNA large subunit methyltransferase G (Shigella boydii serotype 4 (strain Sb227)).